The sequence spans 186 residues: Testis-expressed protein 36 (186 aa).

Residues 1–52 (MTKGRRFNPPSDKDGRWFPHIGLTQKTPESITSATSKEPQSPHLPRQAEGKL) form a disordered region. Polar residues predominate over residues 24 to 39 (TQKTPESITSATSKEP).

The sequence is that of Testis-expressed protein 36 (TEX36) from Homo sapiens (Human).